Here is a 389-residue protein sequence, read N- to C-terminus: Sedoheptulose-1,7-bisphosphatase, chloroplastic (389 aa).

An intrachain disulfide couples Cys-115 to Cys-120. Residues Asp-126, Glu-155, Asp-173, Leu-175, and Asp-176 each contribute to the Mg(2+) site. Substrate is bound by residues 176–179, Tyr-287, and Lys-317; that span reads DGSS. A Mg(2+)-binding site is contributed by Glu-323.

Belongs to the FBPase class 1 family. As to quaternary structure, homodimer. The cofactor is Mg(2+).

The protein localises to the plastid. It is found in the chloroplast. The catalysed reaction is D-sedoheptulose 1,7-bisphosphate + H2O = D-sedoheptulose 7-phosphate + phosphate. It functions in the pathway carbohydrate biosynthesis; Calvin cycle. The polypeptide is Sedoheptulose-1,7-bisphosphatase, chloroplastic (CSBP) (Chlamydomonas reinhardtii (Chlamydomonas smithii)).